A 402-amino-acid polypeptide reads, in one-letter code: MIIHPKVRGFICTTTHPLGCERNVLDQIAATRARGVRNDGPKKVLVIGASSGYGLASRITAAFGFGADTLGVFFEKPGSDKKAGTAGWYNSAAFDTHAKAAGLYSKSINGDAFSDEARAKVIELIKTDMGGQVDLVVYSLASPVRKLPSTGEVKRSALKPIGNTYTATAIDTNKDTIIQASIEPATEQEIEDTITVMGGQDWELWIDALDSAGVLAKGARSVAFSYIGTEITWPIYWHGALGKAKVDLDHTAQRLDARLQASGGGANVAVLKSVVTQASAAIPVMPLYISMVYKIMKEKGLHEGTIEQLDRLFRERLYREDGQPAEVDEQNRLRLDDWELRDDVQDACKALWPQVTTENLFALTDYAGYKHEFLKLFGFERKDVDYDADVDPDVKFDCIELG.

Residues 48–53, 74–75, 111–112, and 140–141 each bind NAD(+); these read GASSGY, FE, DA, and LA. Tyrosine 226 lines the substrate pocket. Catalysis depends on tyrosine 236, which acts as the Proton donor. NAD(+)-binding positions include lysine 245 and 274–276; that span reads VVT.

This sequence belongs to the TER reductase family. As to quaternary structure, monomer.

The catalysed reaction is a 2,3-saturated acyl-[ACP] + NAD(+) = a (2E)-enoyl-[ACP] + NADH + H(+). The protein operates within lipid metabolism; fatty acid biosynthesis. Its function is as follows. Involved in the final reduction of the elongation cycle of fatty acid synthesis (FAS II). Catalyzes the reduction of a carbon-carbon double bond in an enoyl moiety that is covalently linked to an acyl carrier protein (ACP). This Xanthomonas campestris pv. campestris (strain 8004) protein is Enoyl-[acyl-carrier-protein] reductase [NADH].